We begin with the raw amino-acid sequence, 125 residues long: Small ribosomal subunit protein bS16 (125 aa).

The segment at 87–125 (EGKKKQALARQSASKKAVKEKTEESKGSEVDSETSTSAD) is disordered. A compositionally biased stretch (basic and acidic residues) spans 103–115 (AVKEKTEESKGSE).

Belongs to the bacterial ribosomal protein bS16 family.

The sequence is that of Small ribosomal subunit protein bS16 from Prochlorococcus marinus (strain MIT 9211).